The sequence spans 188 residues: dCTP deaminase (188 aa).

DCTP-binding positions include 111 to 116 (KSTYAR), 135 to 137 (TLE), glutamine 156, tyrosine 170, and glutamine 180. The active-site Proton donor/acceptor is glutamate 137.

Belongs to the dCTP deaminase family. Homotrimer.

It catalyses the reaction dCTP + H2O + H(+) = dUTP + NH4(+). The protein operates within pyrimidine metabolism; dUMP biosynthesis; dUMP from dCTP (dUTP route): step 1/2. Functionally, catalyzes the deamination of dCTP to dUTP. In Nitrosomonas eutropha (strain DSM 101675 / C91 / Nm57), this protein is dCTP deaminase.